Consider the following 473-residue polypeptide: ATP synthase subunit beta 2 (473 aa).

Position 158 to 165 (158 to 165 (GGAGVGKT)) interacts with ATP.

This sequence belongs to the ATPase alpha/beta chains family. F-type ATPases have 2 components, CF(1) - the catalytic core - and CF(0) - the membrane proton channel. CF(1) has five subunits: alpha(3), beta(3), gamma(1), delta(1), epsilon(1). CF(0) has three main subunits: a(1), b(2) and c(9-12). The alpha and beta chains form an alternating ring which encloses part of the gamma chain. CF(1) is attached to CF(0) by a central stalk formed by the gamma and epsilon chains, while a peripheral stalk is formed by the delta and b chains.

The protein localises to the cell membrane. The catalysed reaction is ATP + H2O + 4 H(+)(in) = ADP + phosphate + 5 H(+)(out). Functionally, produces ATP from ADP in the presence of a proton gradient across the membrane. The catalytic sites are hosted primarily by the beta subunits. The chain is ATP synthase subunit beta 2 from Listeria monocytogenes serotype 4b (strain F2365).